A 219-amino-acid polypeptide reads, in one-letter code: Probable GTP-binding protein EngB (219 aa).

Residues 24 to 207 form the EngB-type G domain; the sequence is VQPEIAFAGR…HELIESWLRP (184 aa). GTP is bound by residues 32–39, 59–63, 81–84, 148–151, and 186–188; these read GRSNAGKS, GRTQH, DLPG, TKCD, and FSA. Mg(2+) contacts are provided by Ser39 and Thr61.

It belongs to the TRAFAC class TrmE-Era-EngA-EngB-Septin-like GTPase superfamily. EngB GTPase family. It depends on Mg(2+) as a cofactor.

Functionally, necessary for normal cell division and for the maintenance of normal septation. This chain is Probable GTP-binding protein EngB, found in Burkholderia ambifaria (strain ATCC BAA-244 / DSM 16087 / CCUG 44356 / LMG 19182 / AMMD) (Burkholderia cepacia (strain AMMD)).